The chain runs to 232 residues: Small ribosomal subunit protein uS2 (232 aa).

Belongs to the universal ribosomal protein uS2 family.

The protein is Small ribosomal subunit protein uS2 of Alkaliphilus oremlandii (strain OhILAs) (Clostridium oremlandii (strain OhILAs)).